The primary structure comprises 237 residues: Fluoroquinolones export permease protein MT2761 (237 aa).

6 helical membrane-spanning segments follow: residues 20–40, 49–69, 96–116, 119–139, 147–167, and 199–219; these read FLHAAVFSGLIWLAVLLPMPV, YVLVGDIAIIGFFFVGGTVFF, VLLAISLFVAVVVATIVHGLG, LLPLVAGIVLGTLLMLLVGFS, VTDWFLAAVIPLAIMLAPPVV, and LAPWQVGYAVVYPIVCAAGLC.

As to quaternary structure, the complex is composed of 2 ATP-binding proteins and 2 transmembrane proteins.

Its subcellular location is the cell membrane. Functionally, part of the ABC transporter complex involved in fluoroquinolones export. Probably responsible for the translocation of the substrate across the membrane. The polypeptide is Fluoroquinolones export permease protein MT2761 (Mycobacterium tuberculosis (strain CDC 1551 / Oshkosh)).